The primary structure comprises 199 residues: Probable nicotinate-nucleotide adenylyltransferase (199 aa).

Belongs to the NadD family.

It catalyses the reaction nicotinate beta-D-ribonucleotide + ATP + H(+) = deamido-NAD(+) + diphosphate. Its pathway is cofactor biosynthesis; NAD(+) biosynthesis; deamido-NAD(+) from nicotinate D-ribonucleotide: step 1/1. Its function is as follows. Catalyzes the reversible adenylation of nicotinate mononucleotide (NaMN) to nicotinic acid adenine dinucleotide (NaAD). This chain is Probable nicotinate-nucleotide adenylyltransferase, found in Corynebacterium jeikeium (strain K411).